The primary structure comprises 214 residues: uncharacterized protein (214 aa).

A run of 4 helical transmembrane segments spans residues 10–30 (IPPLAVYLLVSGVVGVESLGI), 55–75 (IGVGVVAVIGAAVGDSIGYAI), 147–167 (VSGAICWAGGTTALVYFAGMA), and 174–194 (RFSWIALIITVVVGIIAAILL).

It belongs to the DedA family.

The protein localises to the cell membrane. This is an uncharacterized protein from Mycobacterium leprae (strain TN).